Consider the following 112-residue polypeptide: Divalent-cation tolerance protein CutA (112 aa).

The Cu cation site is built by Cys-16, His-83, and His-84.

This sequence belongs to the CutA family. Homotrimer. Cu cation serves as cofactor.

The protein resides in the cytoplasm. Its function is as follows. Involved in resistance toward heavy metals. The chain is Divalent-cation tolerance protein CutA from Shigella boydii serotype 18 (strain CDC 3083-94 / BS512).